Reading from the N-terminus, the 389-residue chain is Probable protein phosphatase 2C 12 (389 aa).

The PPM-type phosphatase domain maps to 42 to 356; sequence VASLFSQRGK…DDCSAVCLFL (315 aa). The Mn(2+) site is built by aspartate 77 and glycine 78. The disordered stretch occupies residues 119–145; sequence AFSDDAAASSSADSSGNSSPQPSASAS. Over residues 121–145 the composition is skewed to low complexity; the sequence is SDDAAASSSADSSGNSSPQPSASAS. Mn(2+)-binding residues include aspartate 301 and aspartate 347.

This sequence belongs to the PP2C family. The cofactor is Mg(2+). Requires Mn(2+) as cofactor.

It carries out the reaction O-phospho-L-seryl-[protein] + H2O = L-seryl-[protein] + phosphate. It catalyses the reaction O-phospho-L-threonyl-[protein] + H2O = L-threonyl-[protein] + phosphate. The polypeptide is Probable protein phosphatase 2C 12 (Oryza sativa subsp. japonica (Rice)).